The following is a 276-amino-acid chain: NAD kinase (276 aa).

The active-site Proton acceptor is aspartate 61. NAD(+) is bound by residues 61–62 (DG), arginine 66, 135–136 (NE), arginine 146, histidine 163, aspartate 165, and alanine 200.

Belongs to the NAD kinase family. A divalent metal cation serves as cofactor.

Its subcellular location is the cytoplasm. The catalysed reaction is NAD(+) + ATP = ADP + NADP(+) + H(+). Its function is as follows. Involved in the regulation of the intracellular balance of NAD and NADP, and is a key enzyme in the biosynthesis of NADP. Catalyzes specifically the phosphorylation on 2'-hydroxyl of the adenosine moiety of NAD to yield NADP. In Chloroflexus aggregans (strain MD-66 / DSM 9485), this protein is NAD kinase.